The following is a 660-amino-acid chain: Pro-secreted protein ORF2 (660 aa).

An N-terminal signal peptide occupies residues 1–23 (MRPRAVLLLLFVLLPMLPAPPAG). 2 disordered regions span residues 19–43 (APPA…GFWG) and 64–125 (ADVV…VPDV). Positions 28 to 33 (RRRGRR) match the Nuclear localization signal motif. Low complexity predominate over residues 93–124 (RPSTAPRRRSAPAGAAPLTAVSPAPDTAPVPD). Asparagine 137 and asparagine 310 each carry an N-linked (GlcNAc...) asparagine; by host glycan. A particle formation region spans residues 368-394 (IALTLFNLADTLLGGLPTELISSAGGQ). The N-linked (GlcNAc...) asparagine; by host glycan is linked to asparagine 562. The interval 585–610 (TTSLGAGPTSISAVGVLAPHSALAVL) is oligomerization.

It belongs to the hepevirus capsid protein family. In terms of assembly, homodimer. Self-assembles to form the capsid. The capsid is dominated by dimers that define the 30 morphological units. Interacts with phosphorylated protein ORF3. Interacts with host TMEM134. Interacts with host ASGR1 and ASGR2; these interactions facilitate infection of host hepatocytes. Cleaved by host protease in the N-terminus. Post-translationally, N-glycosylated. In terms of processing, not N-glycosylated. The C-terminus of the capsid protein ORF2 is truncated in non-enveloped virions shedded in feces, probably due to host proteases.

It localises to the secreted. The protein resides in the virion. The protein localises to the host cytoplasm. Its subcellular location is the host endoplasmic reticulum. It is found in the host Golgi apparatus. It localises to the host cell surface. The protein resides in the host nucleus. Plays a role in the inhibition of host antibody-mediated neutralization without blocking viral cell entry. Its function is as follows. Forms an icosahedral capsid with a T=1 symmetry and a 34 nm diameter. The capsid is composed of 60 copies linked to each other. Binds to the 5' end of the genomic RNA to mediate genome encapsidation. Binds to heparin surface proteoglycans (HSPGs) to mediate viral entry. Additionally, the interactions with host ASGR1 and ASGR2 facilitate viral infection of hepatocytes. Inhibits IFN production by blocking host TBK1-induced IRF3 phosphorylation. The nuclear form probably modulates host gene expression. In Hepatitis E virus genotype 3 (isolate Swine/United States/swUS1) (HEV-3), this protein is Pro-secreted protein ORF2.